We begin with the raw amino-acid sequence, 607 residues long: Glutamine--fructose-6-phosphate aminotransferase [isomerizing] (607 aa).

The active-site Nucleophile; for GATase activity is the Cys-2. The Glutamine amidotransferase type-2 domain occupies 2–217 (CGIVGIVGHS…DGDWAVVRRD (216 aa)). SIS domains follow at residues 283 to 422 (LPFD…ARGV) and 455 to 597 (IARE…VDQP). Lys-602 serves as the catalytic For Fru-6P isomerization activity.

As to quaternary structure, homodimer.

Its subcellular location is the cytoplasm. The enzyme catalyses D-fructose 6-phosphate + L-glutamine = D-glucosamine 6-phosphate + L-glutamate. In terms of biological role, catalyzes the first step in hexosamine metabolism, converting fructose-6P into glucosamine-6P using glutamine as a nitrogen source. The chain is Glutamine--fructose-6-phosphate aminotransferase [isomerizing] from Mesorhizobium japonicum (strain LMG 29417 / CECT 9101 / MAFF 303099) (Mesorhizobium loti (strain MAFF 303099)).